A 435-amino-acid chain; its full sequence is Nuclear receptor subfamily 6 group A member 1 (435 aa).

The nuclear receptor DNA-binding region spans 11–86; that stretch reads QRACLICGDR…MGMNRKAIRE (76 aa). 2 consecutive NR C4-type zinc fingers follow at residues 14 to 34 and 50 to 69; these read CLIC…CEGC and CSRD…CQYC. The segment at 84–158 is disordered; it reads IREDGMPGGR…STPSSSRSME (75 aa). Over residues 121 to 141 the composition is skewed to polar residues; it reads NTSWSNNGDSDHSSPGNAVSE. The segment covering 142 to 156 has biased composition (low complexity); the sequence is SNQPSPVSTPSSSRS. The 232-residue stretch at 204 to 435 folds into the NR LBD domain; the sequence is QSHTLINQLL…HSCKTIVTKE (232 aa).

This sequence belongs to the nuclear hormone receptor family. NR6 subfamily. Homodimer. As to expression, transiently expressed in differentiating cells of all embryonic germ layers. Expressed in an anterior to posterior concentration gradient from late gastrula to midneurula stages. Shows a complicated spatio-temporal pattern of expression during neurulation, being predominant in the neural plate and neural crest in midneurula embryos. At late tailbud (stage 30), mainly expressed in the head mesenchyme, gill arches and tail tip. Expression persists in the epidermis, somites and endoderm, and in the central nervous system, expression is restricted to the midbrain, hindbrain and part of the spinal cord. Isoforms Oo and Em are both expressed in the brain and isoform Oo is expressed in the germ cells of both the adult testis and ovary.

It localises to the cytoplasm. The protein localises to the nucleus. In terms of biological role, probable orphan nuclear receptor. Binds to a response element containing repeats of the motif 5'-AGGTCA-3'. Required for anterior-posterior patterning during organogenesis. Acts with chordin to play a role in patterning the midbrain-hindbrain. Isoform Em is required for integrin-mediated cell matrix interaction during neurulation and for the morphogenetic movements leading to formation of the neural tube. Also mediates the effect of retinoic acid on primary neurogenesis. This Xenopus laevis (African clawed frog) protein is Nuclear receptor subfamily 6 group A member 1.